We begin with the raw amino-acid sequence, 238 residues long: Sugar fermentation stimulation protein homolog (238 aa).

This sequence belongs to the SfsA family.

The chain is Sugar fermentation stimulation protein homolog from Klebsiella pneumoniae (strain 342).